Consider the following 491-residue polypeptide: UDP-N-acetylmuramate--L-alanine ligase (491 aa).

126–132 contributes to the ATP binding site; sequence GTHGKTT.

Belongs to the MurCDEF family.

The protein localises to the cytoplasm. The enzyme catalyses UDP-N-acetyl-alpha-D-muramate + L-alanine + ATP = UDP-N-acetyl-alpha-D-muramoyl-L-alanine + ADP + phosphate + H(+). Its pathway is cell wall biogenesis; peptidoglycan biosynthesis. Cell wall formation. The protein is UDP-N-acetylmuramate--L-alanine ligase of Shigella boydii serotype 18 (strain CDC 3083-94 / BS512).